We begin with the raw amino-acid sequence, 285 residues long: MLLATFKLCAGSSYRHMRNMKGLRQQAVMAISQELNRRALGGPTPSTWINQVRRRSSLLGSRLEETLYSDQELAYLQQGEEAMQKALGILSNQEGWKKESQQDNGDKVMSKVVPDVGKVFRLEVVVDQPMERLYEELVERMEAMGEWNPNVKEIKVLQKIGKDTFITHELAAEAAGNLVGPRDFVSVRCAKRRGSTCVLAGMATDFGNMPEQKGVIRAEHGPTCMVLHPLAGSPSKTKLTWLLSIDLKGWLPKSIINQVLSQTQVDFANHLRKRLESHPASEARC.

Residues 1 to 63 (MLLATFKLCA…RRSSLLGSRL (63 aa)) constitute a mitochondrion transit peptide. Serine 57 and serine 195 each carry phosphoserine; by PKA. The region spanning 67–280 (LYSDQELAYL…LRKRLESHPA (214 aa)) is the START domain.

In terms of assembly, may interact with TSPO. In terms of tissue distribution, expressed in gonads, adrenal cortex and kidney.

Its subcellular location is the mitochondrion. It catalyses the reaction cholesterol(in) = cholesterol(out). It functions in the pathway steroid metabolism; cholesterol metabolism. Functionally, plays a key role in steroid hormone synthesis by enhancing the metabolism of cholesterol into pregnenolone. Mediates the transfer of cholesterol from the outer mitochondrial membrane to the inner mitochondrial membrane where it is cleaved to pregnenolone. The polypeptide is Steroidogenic acute regulatory protein, mitochondrial (STAR) (Homo sapiens (Human)).